A 68-amino-acid polypeptide reads, in one-letter code: Large ribosomal subunit protein bL32 (68 aa).

This sequence belongs to the bacterial ribosomal protein bL32 family.

This Aster yellows witches'-broom phytoplasma (strain AYWB) protein is Large ribosomal subunit protein bL32.